We begin with the raw amino-acid sequence, 146 residues long: Large ribosomal subunit protein uL15 (146 aa).

The segment covering 1–18 (MKLHELKPSEGSRKERNR) has biased composition (basic and acidic residues). The disordered stretch occupies residues 1–50 (MKLHELKPSEGSRKERNRVGRGTGSGNGKTSGRGHKGQKARSGGGVRLGF). Residues 21–31 (RGTGSGNGKTS) are compositionally biased toward gly residues.

It belongs to the universal ribosomal protein uL15 family. As to quaternary structure, part of the 50S ribosomal subunit.

In terms of biological role, binds to the 23S rRNA. The protein is Large ribosomal subunit protein uL15 of Listeria welshimeri serovar 6b (strain ATCC 35897 / DSM 20650 / CCUG 15529 / CIP 8149 / NCTC 11857 / SLCC 5334 / V8).